We begin with the raw amino-acid sequence, 325 residues long: GPI-linked NAD(P)(+)--arginine ADP-ribosyltransferase 1 (325 aa).

A signal peptide spans 1 to 22; sequence MKIPAMMSLLLVSVGLRDGVQV. Cystine bridges form between Cys53/Cys272 and Cys169/Cys219. Residue Asn65 is glycosylated (N-linked (GlcNAc...) asparagine). The TR mART core domain occupies 73-268; the sequence is KVYADGWAQA…IYLRALGKRS (196 aa). Residues Tyr117 and Arg174 each coordinate NAD(+). Active-site residues include Arg174 and Ser197. Ser228 lines the NAD(+) pocket. Residue Glu235 is part of the active site. A glycan (N-linked (GlcNAc...) asparagine) is linked at Asn248. A lipid anchor (GPI-anchor amidated serine) is attached at Ser290. The propeptide at 291–325 is removed in mature form; sequence APGSISASCSLLLLLLFLVLSALPENPGLQQLTRC.

It belongs to the Arg-specific ADP-ribosyltransferase family. As to expression, abundantly expressed in cardiac and skeletal muscle. Low levels also found in lung.

It is found in the sarcoplasmic reticulum membrane. It catalyses the reaction L-arginyl-[protein] + NAD(+) = N(omega)-(ADP-D-ribosyl)-L-arginyl-[protein] + nicotinamide + H(+). Functionally, has ADP-ribosyltransferase activity toward GLP1R. The chain is GPI-linked NAD(P)(+)--arginine ADP-ribosyltransferase 1 (Art1) from Mus musculus (Mouse).